The chain runs to 253 residues: 5'-nucleotidase SurE (253 aa).

The a divalent metal cation site is built by Asp-8, Asp-9, Ser-40, and Asn-93.

Belongs to the SurE nucleotidase family. A divalent metal cation is required as a cofactor.

It localises to the cytoplasm. The catalysed reaction is a ribonucleoside 5'-phosphate + H2O = a ribonucleoside + phosphate. Its function is as follows. Nucleotidase that shows phosphatase activity on nucleoside 5'-monophosphates. The chain is 5'-nucleotidase SurE from Methylobacterium sp. (strain 4-46).